Reading from the N-terminus, the 403-residue chain is O-succinylhomoserine sulfhydrylase (403 aa).

Lysine 219 is subject to N6-(pyridoxal phosphate)lysine.

Belongs to the trans-sulfuration enzymes family. MetZ subfamily. In terms of assembly, homotetramer. Requires pyridoxal 5'-phosphate as cofactor.

It catalyses the reaction O-succinyl-L-homoserine + hydrogen sulfide = L-homocysteine + succinate. It participates in amino-acid biosynthesis; L-methionine biosynthesis via de novo pathway; L-homocysteine from O-succinyl-L-homoserine: step 1/1. Functionally, catalyzes the formation of L-homocysteine from O-succinyl-L-homoserine (OSHS) and hydrogen sulfide. Cannot use the other activated form of L-homoserine, O-acetyl-L-homoserine, as a substrate. The sequence is that of O-succinylhomoserine sulfhydrylase from Pseudomonas aeruginosa (strain ATCC 15692 / DSM 22644 / CIP 104116 / JCM 14847 / LMG 12228 / 1C / PRS 101 / PAO1).